A 224-amino-acid chain; its full sequence is C-&gt;U-editing enzyme APOBEC-2 (224 aa).

The tract at residues 1-24 (MAQKEEAAVATEAASQNGEDLENL) is disordered. Positions 60 and 98 each coordinate Zn(2+). The region spanning 64-169 (GRNKTFLCYV…PEIQAALKKL (106 aa)) is the CMP/dCMP-type deaminase domain. Glu100 (proton donor) is an active-site residue. Positions 128 and 131 each coordinate Zn(2+).

The protein belongs to the cytidine and deoxycytidylate deaminase family. Homotetramer. It depends on Zn(2+) as a cofactor. As to expression, expressed exclusively in heart and skeletal muscle.

The catalysed reaction is cytidine(6666) in apoB mRNA + H2O + H(+) = uridine(6666) in apoB mRNA + NH4(+). Probable C to U editing enzyme whose physiological substrate is not yet known. Does not display detectable apoB mRNA editing. Has a low intrinsic cytidine deaminase activity. May play a role in the epigenetic regulation of gene expression through the process of active DNA demethylation. The chain is C-&gt;U-editing enzyme APOBEC-2 (APOBEC2) from Homo sapiens (Human).